The chain runs to 554 residues: Chaperonin GroEL (554 aa).

Residues 30 to 33 (TLGP), Lys-51, 87 to 91 (DGTTT), Gly-415, 478 to 480 (DAA), and Asp-494 contribute to the ATP site.

The protein belongs to the chaperonin (HSP60) family. Forms a cylinder of 14 subunits composed of two heptameric rings stacked back-to-back. Interacts with the co-chaperonin GroES.

It is found in the cytoplasm. It catalyses the reaction ATP + H2O + a folded polypeptide = ADP + phosphate + an unfolded polypeptide.. Its function is as follows. Together with its co-chaperonin GroES, plays an essential role in assisting protein folding. The GroEL-GroES system forms a nano-cage that allows encapsulation of the non-native substrate proteins and provides a physical environment optimized to promote and accelerate protein folding. The sequence is that of Chaperonin GroEL from Pelobacter propionicus (strain DSM 2379 / NBRC 103807 / OttBd1).